The following is a 227-amino-acid chain: Cytochrome c oxidase subunit 2 (227 aa).

Over 1–14 (MAYPFQLGLQDATS) the chain is Mitochondrial intermembrane. Residues 15 to 45 (PIMEELLHFHDHTLMIVFLISSLVLYIISLM) traverse the membrane as a helical segment. Topologically, residues 46–59 (LTTKLTHTSTMDAQ) are mitochondrial matrix. Residues 60–87 (EVETVWTILPAIILILIALPSLRILYMM) traverse the membrane as a helical segment. The Mitochondrial intermembrane segment spans residues 88 to 227 (DEINNPSLTV…YFETWSAVMV (140 aa)). Positions 161, 196, 198, 200, 204, and 207 each coordinate Cu cation. Residue Glu-198 coordinates Mg(2+). A Phosphotyrosine modification is found at Tyr-218.

This sequence belongs to the cytochrome c oxidase subunit 2 family. As to quaternary structure, component of the cytochrome c oxidase (complex IV, CIV), a multisubunit enzyme composed of 14 subunits. The complex is composed of a catalytic core of 3 subunits MT-CO1, MT-CO2 and MT-CO3, encoded in the mitochondrial DNA, and 11 supernumerary subunits COX4I, COX5A, COX5B, COX6A, COX6B, COX6C, COX7A, COX7B, COX7C, COX8 and NDUFA4, which are encoded in the nuclear genome. The complex exists as a monomer or a dimer and forms supercomplexes (SCs) in the inner mitochondrial membrane with NADH-ubiquinone oxidoreductase (complex I, CI) and ubiquinol-cytochrome c oxidoreductase (cytochrome b-c1 complex, complex III, CIII), resulting in different assemblies (supercomplex SCI(1)III(2)IV(1) and megacomplex MCI(2)III(2)IV(2)). Found in a complex with TMEM177, COA6, COX18, COX20, SCO1 and SCO2. Interacts with TMEM177 in a COX20-dependent manner. Interacts with COX20. Interacts with COX16. The cofactor is Cu cation.

The protein localises to the mitochondrion inner membrane. The enzyme catalyses 4 Fe(II)-[cytochrome c] + O2 + 8 H(+)(in) = 4 Fe(III)-[cytochrome c] + 2 H2O + 4 H(+)(out). Component of the cytochrome c oxidase, the last enzyme in the mitochondrial electron transport chain which drives oxidative phosphorylation. The respiratory chain contains 3 multisubunit complexes succinate dehydrogenase (complex II, CII), ubiquinol-cytochrome c oxidoreductase (cytochrome b-c1 complex, complex III, CIII) and cytochrome c oxidase (complex IV, CIV), that cooperate to transfer electrons derived from NADH and succinate to molecular oxygen, creating an electrochemical gradient over the inner membrane that drives transmembrane transport and the ATP synthase. Cytochrome c oxidase is the component of the respiratory chain that catalyzes the reduction of oxygen to water. Electrons originating from reduced cytochrome c in the intermembrane space (IMS) are transferred via the dinuclear copper A center (CU(A)) of subunit 2 and heme A of subunit 1 to the active site in subunit 1, a binuclear center (BNC) formed by heme A3 and copper B (CU(B)). The BNC reduces molecular oxygen to 2 water molecules using 4 electrons from cytochrome c in the IMS and 4 protons from the mitochondrial matrix. The chain is Cytochrome c oxidase subunit 2 (MT-CO2) from Lycalopex culpaeus (Culpeo fox).